A 105-amino-acid polypeptide reads, in one-letter code: Thioredoxin (105 aa).

The Thioredoxin domain occupies 2–105 (VKLIESKEAF…KLEASITEYA (104 aa)). Residue K3 is modified to N6-acetyllysine. K8 carries the N6-succinyllysine modification. Active-site nucleophile residues include C32 and C35. Cysteines 32 and 35 form a disulfide. K39 carries the post-translational modification N6-acetyllysine. An S-nitrosocysteine mark is found at C62 and C69. At C73 the chain carries S-nitrosocysteine; alternate. K94 bears the N6-acetyllysine; alternate mark. K94 bears the N6-succinyllysine; alternate mark.

This sequence belongs to the thioredoxin family. Homodimer; disulfide-linked. Interacts with TXNIP through the redox-active site. Interacts with MAP3K5 and CASP3. Interacts with APEX1; the interaction stimulates the FOS/JUN AP-1 DNA-binding activity in a redox-dependent manner. Post-translationally, in the fully reduced protein, both Cys-69 and Cys-73 are nitrosylated in response to nitric oxide (NO). When two disulfide bonds are present in the protein, only Cys-73 is nitrosylated. Cys-73 can serve as donor for nitrosylation of target proteins.

It localises to the nucleus. The protein localises to the cytoplasm. It is found in the secreted. In terms of biological role, participates in various redox reactions through the reversible oxidation of its active center dithiol to a disulfide and catalyzes dithiol-disulfide exchange reactions. Plays a role in the reversible S-nitrosylation of cysteine residues in target proteins, and thereby contributes to the response to intracellular nitric oxide. Nitrosylates the active site Cys of CASP3 in response to nitric oxide (NO), and thereby inhibits caspase-3 activity. Induces the FOS/JUN AP-1 DNA binding activity in ionizing radiation (IR) cells through its oxidation/reduction status and stimulates AP-1 transcriptional activity. ADF augments the expression of the interleukin-2 receptor TAC (IL2R/P55). This Mus musculus (Mouse) protein is Thioredoxin (Txn).